The chain runs to 259 residues: Thiazole synthase (259 aa).

The active-site Schiff-base intermediate with DXP is the lysine 95. 1-deoxy-D-xylulose 5-phosphate-binding positions include glycine 156, 183–184 (AG), and 205–206 (NS).

The protein belongs to the ThiG family. Homotetramer. Forms heterodimers with either ThiH or ThiS.

It is found in the cytoplasm. It catalyses the reaction [ThiS sulfur-carrier protein]-C-terminal-Gly-aminoethanethioate + 2-iminoacetate + 1-deoxy-D-xylulose 5-phosphate = [ThiS sulfur-carrier protein]-C-terminal Gly-Gly + 2-[(2R,5Z)-2-carboxy-4-methylthiazol-5(2H)-ylidene]ethyl phosphate + 2 H2O + H(+). It participates in cofactor biosynthesis; thiamine diphosphate biosynthesis. Catalyzes the rearrangement of 1-deoxy-D-xylulose 5-phosphate (DXP) to produce the thiazole phosphate moiety of thiamine. Sulfur is provided by the thiocarboxylate moiety of the carrier protein ThiS. In vitro, sulfur can be provided by H(2)S. This is Thiazole synthase from Coxiella burnetii (strain RSA 331 / Henzerling II).